A 407-amino-acid polypeptide reads, in one-letter code: Phosphopentomutase (407 aa).

Aspartate 10, aspartate 306, histidine 311, aspartate 347, histidine 348, and histidine 359 together coordinate Mn(2+).

It belongs to the phosphopentomutase family. It depends on Mn(2+) as a cofactor.

The protein localises to the cytoplasm. The enzyme catalyses 2-deoxy-alpha-D-ribose 1-phosphate = 2-deoxy-D-ribose 5-phosphate. The catalysed reaction is alpha-D-ribose 1-phosphate = D-ribose 5-phosphate. The protein operates within carbohydrate degradation; 2-deoxy-D-ribose 1-phosphate degradation; D-glyceraldehyde 3-phosphate and acetaldehyde from 2-deoxy-alpha-D-ribose 1-phosphate: step 1/2. Its function is as follows. Isomerase that catalyzes the conversion of deoxy-ribose 1-phosphate (dRib-1-P) and ribose 1-phosphate (Rib-1-P) to deoxy-ribose 5-phosphate (dRib-5-P) and ribose 5-phosphate (Rib-5-P), respectively. The protein is Phosphopentomutase of Escherichia coli (strain UTI89 / UPEC).